Reading from the N-terminus, the 226-residue chain is Protease RseP (226 aa).

Positions 1–56 (VEKVIPGSAAEKAGLQKGDRIVKVGSQEIDVWHTFTSFVSNNPNVPLELSVDRAGH) constitute a PDZ domain. A run of 2 helical transmembrane segments spans residues 152–174 (LVYY…LIPL) and 202–221 (FSYR…ALFN).

Belongs to the peptidase M50B family. Interacts with RseA. Requires Zn(2+) as cofactor.

Its subcellular location is the cell inner membrane. In terms of biological role, a site-2 regulated intramembrane protease (S2P) that cleaves the peptide bond between 'Ala-108' and 'Cys-109' in the transmembrane region of RseA. Part of a regulated intramembrane proteolysis (RIP) cascade. Acts on DegS-cleaved RseA to release the cytoplasmic domain of RseA. This provides the cell with sigma-E (RpoE) activity through the proteolysis of RseA. The chain is Protease RseP (rseP) from Photorhabdus luminescens (Xenorhabdus luminescens).